Reading from the N-terminus, the 47-residue chain is Photosystem II reaction center protein K (47 aa).

Positions 1-10 (MAPLTLDLLA) are excised as a propeptide. Residues 26-46 (LPLIPLLFFLLVFVWQAAVGF) form a helical membrane-spanning segment.

It belongs to the PsbK family. In terms of assembly, PSII is composed of 1 copy each of membrane proteins PsbA, PsbB, PsbC, PsbD, PsbE, PsbF, PsbH, PsbI, PsbJ, PsbK, PsbL, PsbM, PsbT, PsbX, PsbY, Psb30/Ycf12, peripheral proteins PsbO, CyanoQ (PsbQ), PsbU, PsbV and a large number of cofactors. It forms dimeric complexes.

Its subcellular location is the cellular thylakoid membrane. One of the components of the core complex of photosystem II (PSII). PSII is a light-driven water:plastoquinone oxidoreductase that uses light energy to abstract electrons from H(2)O, generating O(2) and a proton gradient subsequently used for ATP formation. It consists of a core antenna complex that captures photons, and an electron transfer chain that converts photonic excitation into a charge separation. In Prochlorococcus marinus (strain SARG / CCMP1375 / SS120), this protein is Photosystem II reaction center protein K.